The chain runs to 470 residues: tRNA-2-methylthio-N(6)-dimethylallyladenosine synthase (470 aa).

The MTTase N-terminal domain occupies 5–122; it reads RKLYVKSFGC…LPELLAEAKA (118 aa). Residues C14, C50, C85, C163, C167, and C170 each contribute to the [4Fe-4S] cluster site. The Radical SAM core domain maps to 149–383; it reads RSRGPAAFVT…LLEASKAAFD (235 aa). Residues 384–446 enclose the TRAM domain; the sequence is ESCRGRTFDI…PNSLAGVPAE (63 aa). The interval 439–470 is disordered; it reads SLAGVPAEASEPSVSQSPVSSARSRPLAAMEA. A compositionally biased stretch (low complexity) spans 444–464; sequence PAEASEPSVSQSPVSSARSRP.

It belongs to the methylthiotransferase family. MiaB subfamily. As to quaternary structure, monomer. [4Fe-4S] cluster serves as cofactor.

The protein localises to the cytoplasm. It catalyses the reaction N(6)-dimethylallyladenosine(37) in tRNA + (sulfur carrier)-SH + AH2 + 2 S-adenosyl-L-methionine = 2-methylsulfanyl-N(6)-dimethylallyladenosine(37) in tRNA + (sulfur carrier)-H + 5'-deoxyadenosine + L-methionine + A + S-adenosyl-L-homocysteine + 2 H(+). Functionally, catalyzes the methylthiolation of N6-(dimethylallyl)adenosine (i(6)A), leading to the formation of 2-methylthio-N6-(dimethylallyl)adenosine (ms(2)i(6)A) at position 37 in tRNAs that read codons beginning with uridine. This is tRNA-2-methylthio-N(6)-dimethylallyladenosine synthase from Xanthobacter autotrophicus (strain ATCC BAA-1158 / Py2).